The primary structure comprises 76 residues: RNA-binding protein KhpA (76 aa).

The KH domain occupies 29-76 (SLHIELSVHPDDMGKVIGKQGRTAKALRSVVYAAATKQKRRVRLDIID).

It belongs to the KhpA RNA-binding protein family. In terms of assembly, forms a complex with KhpB.

Its subcellular location is the cytoplasm. Functionally, a probable RNA chaperone. Forms a complex with KhpB which binds to cellular RNA and controls its expression. Plays a role in peptidoglycan (PG) homeostasis and cell length regulation. This Halalkalibacterium halodurans (strain ATCC BAA-125 / DSM 18197 / FERM 7344 / JCM 9153 / C-125) (Bacillus halodurans) protein is RNA-binding protein KhpA.